Here is a 581-residue protein sequence, read N- to C-terminus: Adenine deaminase (581 aa).

The protein belongs to the metallo-dependent hydrolases superfamily. Adenine deaminase family. The cofactor is Mn(2+).

The enzyme catalyses adenine + H2O + H(+) = hypoxanthine + NH4(+). This Brucella suis biovar 1 (strain 1330) protein is Adenine deaminase.